A 653-amino-acid polypeptide reads, in one-letter code: NADH-ubiquinone oxidoreductase chain 5 (653 aa).

Helical transmembrane passes span 1–21 (MYLVIIFLPLLGSIISGFFGR), 30–50 (LITSSFIIITTMLAIFNFFEV), 81–103 (LTVSMLIPVLIVSSLVHIYSIGY), 120–140 (FTFMMIILVTANNYLLMFLGV), 177–197 (FLTIGMFIIIWSFGNLDYSTV), 200–220 (LAPYFNQEFITLIGICLLIGA), 241–261 (TPVSALIHAATMVTAGVYLLM), 274–294 (LILCLWLGAITTIFSSIIGLF), 301–319 (VIAYSTMSQLGMMVIAIGL), 331–351 (NHAFYKALLFLGAGAVIHSVS), 365–385 (FLPLAYSIMLIASLSLVAIPF), 403–423 (FYISSTLVYFIATIGAMFTTL), 452–472 (IFINLPLIILAIFSIFFGYLT), 511–531 (LLPLFFTITLSIIGIMFSEFF), 610–630 (GVITSYALYILIGLIFYVFLL), and 631–651 (YLNIDNNILLLLLFGIFSTIN).

It belongs to the complex I subunit 5 family.

The protein resides in the mitochondrion inner membrane. It catalyses the reaction a ubiquinone + NADH + 5 H(+)(in) = a ubiquinol + NAD(+) + 4 H(+)(out). Functionally, core subunit of the mitochondrial membrane respiratory chain NADH dehydrogenase (Complex I) that is believed to belong to the minimal assembly required for catalysis. Complex I functions in the transfer of electrons from NADH to the respiratory chain. The immediate electron acceptor for the enzyme is believed to be ubiquinone. The protein is NADH-ubiquinone oxidoreductase chain 5 (ND5) of Trichophyton rubrum (Athlete's foot fungus).